Consider the following 406-residue polypeptide: MMFGIGIVLFALAILVSVALHECGHMWVARATGMKVRRYFVGFGPTLWSTRRANRLGSTEYGIKAIPLGGFCDIAGMTSVDEIAPEDRPYAMYKQKVWKRVAVLFAGPAMNFVIGLVLIYGIAIVWGLPNLHQPTTAIVGETGCVAPQITLEEMGECTGPGPAALAGIQAGDEIVKVGDTEVKDFAGMAAAVRKLDGPTRIEFKRDGRVMDTVVDVTPTQRFTSADASAPSTVGAIGVSAVPVQPPAQYNPITAVPATFAFTGDLAVELGKSLAKIPTKIGALVEAIGGGERDKETPISVVGASIIGGETVDAGLWVAFWFFLAQLNFVLGAINLVPLLPFDGGHIAVATYEKIRNMIRSARGMVAAGPVNYLKLMPATYVVLAVVAGYMLLTVTADLVNPLSIFQ.

The helical transmembrane segment at 1-21 (MMFGIGIVLFALAILVSVALH) threads the bilayer. Zn(2+) is bound at residue His-21. Glu-22 is an active-site residue. A Zn(2+)-binding site is contributed by His-25. Residues 108 to 128 (PAMNFVIGLVLIYGIAIVWGL) form a helical membrane-spanning segment. In terms of domain architecture, PDZ spans 125 to 209 (VWGLPNLHQP…RIEFKRDGRV (85 aa)). Asp-206 provides a ligand contact to Zn(2+). 2 helical membrane passes run 327-349 (NFVL…IAVA) and 375-395 (LMPA…LTVT).

The protein belongs to the peptidase M50B family. It depends on Zn(2+) as a cofactor.

The protein localises to the cell membrane. Its activity is regulated as follows. Proteolysis is inhibited by Wag31; when Wag31 is non-functional oxidative stress increases proteolysis. A probable intramembrane site-2 protease (S2P) that cleaves type-2 transmembrane proteins within their membrane-spanning domains. Degrades PbpB (PBP3, FtsI) under conditions of oxidatives stress; degradation is inhibited by Wag31-PbpB interaction. Also cleaves anti-sigma factors RskA, RslA and RslM. Site-1 proteases have not yet been identified in this organism. In terms of biological role, regulated intramembrane proteolysis (RIP) occurs when an extracytoplasmic signal (possibly oxidative stress) triggers a concerted proteolytic cascade to transmit information and elicit cellular responses. The membrane-spanning regulatory substrate protein (includes anti-sigma factors RskA, RslA, RsmA, and PbpB) is first cut extracytoplasmically (site-1 protease, S1P), then within the membrane itself (site-2 protease, S2P, this entry), while cytoplasmic proteases finish degrading the regulatory protein, liberating the effector protein (ECF sigma factors SigK, SigL and SigM). In Mycolicibacterium smegmatis (strain ATCC 700084 / mc(2)155) (Mycobacterium smegmatis), this protein is Zinc metalloprotease Rip1 (rip1).